A 204-amino-acid chain; its full sequence is GTP cyclohydrolase 1 (204 aa).

The Zn(2+) site is built by Cys-92, His-95, and Cys-165.

The protein belongs to the GTP cyclohydrolase I family. Homomer.

It carries out the reaction GTP + H2O = 7,8-dihydroneopterin 3'-triphosphate + formate + H(+). It participates in cofactor biosynthesis; 7,8-dihydroneopterin triphosphate biosynthesis; 7,8-dihydroneopterin triphosphate from GTP: step 1/1. The protein is GTP cyclohydrolase 1 of Mycolicibacterium paratuberculosis (strain ATCC BAA-968 / K-10) (Mycobacterium paratuberculosis).